Here is a 356-residue protein sequence, read N- to C-terminus: GTPase HflX (356 aa).

Positions Pro180–Ser356 constitute a Hflx-type G domain. Residues Gly186–Thr193, Phe211–Ser215, Asp232–Gly235, Asn300–Asp303, and Ser334–Leu336 each bind GTP. Thr193 and Thr213 together coordinate Mg(2+).

Belongs to the TRAFAC class OBG-HflX-like GTPase superfamily. HflX GTPase family. In terms of assembly, monomer. Associates with the 50S ribosomal subunit. Does not associate with 70S ribosomes. Mg(2+) serves as cofactor.

It localises to the cytoplasm. Its activity is regulated as follows. GTPase activity is stimulated by the presence of 50S ribosomal subunits. Hydrolysis is probably regulated by the HflX N-terminal domain. GTPase that associates with the 50S ribosomal subunit and may have a role during protein synthesis or ribosome biogenesis. Specific for GTP. The polypeptide is GTPase HflX (Saccharolobus solfataricus (strain ATCC 35092 / DSM 1617 / JCM 11322 / P2) (Sulfolobus solfataricus)).